The primary structure comprises 196 residues: Endoribonuclease YbeY (196 aa).

Histidine 120, histidine 124, and histidine 130 together coordinate Zn(2+).

Belongs to the endoribonuclease YbeY family. Zn(2+) is required as a cofactor.

It is found in the cytoplasm. Its function is as follows. Single strand-specific metallo-endoribonuclease involved in late-stage 70S ribosome quality control and in maturation of the 3' terminus of the 16S rRNA. The polypeptide is Endoribonuclease YbeY (Corynebacterium glutamicum (strain ATCC 13032 / DSM 20300 / JCM 1318 / BCRC 11384 / CCUG 27702 / LMG 3730 / NBRC 12168 / NCIMB 10025 / NRRL B-2784 / 534)).